Here is a 487-residue protein sequence, read N- to C-terminus: L-tartrate/succinate antiporter (487 aa).

14 consecutive transmembrane segments (helical) span residues 10-30 (YLAP…AGLE), 33-53 (TWLY…EPVP), 54-74 (GAVV…WLLF), 93-113 (WAVS…FMFG), 137-157 (TLFL…VTPS), 189-209 (IGSY…AIFL), 230-250 (LSWG…VLLV), 292-312 (LMVG…AAMV), 313-333 (GYSV…DIVS), 340-360 (VFFW…TGFI), 370-390 (SLSG…FYLL), 393-413 (FFAS…AAAL), 418-438 (IPLP…SILT), and 465-485 (IFGL…MPVV).

It belongs to the SLC13A/DASS transporter (TC 2.A.47) family. DIT1 subfamily.

It localises to the cell inner membrane. It catalyses the reaction (2R,3R)-tartrate(out) + succinate(in) = (2R,3R)-tartrate(in) + succinate(out). In terms of biological role, catalyzes the uptake of tartrate in exchange for intracellular succinate. Essential for anaerobic L-tartrate fermentation. This chain is L-tartrate/succinate antiporter (ttdT), found in Shigella dysenteriae serotype 1 (strain Sd197).